We begin with the raw amino-acid sequence, 357 residues long: Peptide chain release factor 1 (357 aa).

The residue at position 236 (glutamine 236) is an N5-methylglutamine.

It belongs to the prokaryotic/mitochondrial release factor family. Post-translationally, methylated by PrmC. Methylation increases the termination efficiency of RF1.

It is found in the cytoplasm. In terms of biological role, peptide chain release factor 1 directs the termination of translation in response to the peptide chain termination codons UAG and UAA. This is Peptide chain release factor 1 from Mycobacterium ulcerans (strain Agy99).